Here is a 206-residue protein sequence, read N- to C-terminus: MSGTLILVRHGQSEWNLKNLFTGWRDPGLSELGHEEATSAGRKIKDRGLRPDIAFTSVLSRAKVTNTHILEVLGLPALETIEDVALNERDYGDLSGLNKDDARKKWGEEQVHIWRRSYDIPPPGGESLRDTGARVWPYYLREILPQVLRGKTVLVSAHGNSLRSLAMVLDGLSGEEIVKMEIATGVPIVYRLNPDSTVASKEILEG.

Residues 9–16 (RHGQSEWN), 22–23 (TG), Arg-61, 88–91 (ERDY), Lys-99, 115–116 (RR), and 159–160 (GN) each bind substrate. The active-site Tele-phosphohistidine intermediate is the His-10. Residue Glu-88 is the Proton donor/acceptor of the active site.

This sequence belongs to the phosphoglycerate mutase family. BPG-dependent PGAM subfamily. As to quaternary structure, homodimer.

The enzyme catalyses (2R)-2-phosphoglycerate = (2R)-3-phosphoglycerate. The protein operates within carbohydrate degradation; glycolysis; pyruvate from D-glyceraldehyde 3-phosphate: step 3/5. Functionally, catalyzes the interconversion of 2-phosphoglycerate and 3-phosphoglycerate. In Chelativorans sp. (strain BNC1), this protein is 2,3-bisphosphoglycerate-dependent phosphoglycerate mutase.